The chain runs to 427 residues: Intermediate conductance calcium-activated potassium channel protein 4 (427 aa).

Residues 29-49 (ALVLAGTGIGLMVLHAEMLWF) traverse the membrane as a helical segment. Residues 59 to 79 (FLVKCTISISTFLLLCLIVAF) form a helical membrane-spanning segment. The helical transmembrane segment at 108–128 (IVLELVVCGLHPAPVRGPPCV) threads the bilayer. Residues 143-163 (GFLGQGEALLSLAMLLRLYLV) traverse the membrane as a helical segment. A helical transmembrane segment spans residues 207-227 (LLLGLTLGLWLTTAWVLSVAE). Residues 241–261 (LWLIPITFLTIGYGDVVPGTM) constitute an intramembrane region (pore-forming). The chain crosses the membrane as a helical span at residues 265–285 (IVCLCTGVMGVCCTALLVAVV). The tract at residues 286 to 347 (ARKLEFNKAE…RRHQRKLLAA (62 aa)) is calmodulin-binding. His-358 bears the Phosphohistidine mark.

This sequence belongs to the potassium channel KCNN family. KCa3.1/KCNN4 subfamily. Homodimer. Homotetramer. Heterotetramer of potassium channel proteins. Interacts with MTMR6; this interaction leads to selective dephosphorylation of PI(3)P in a lipid microdomain adjacent to KCNN4, resulting in a decrease of intermediate conductance calcium-activated potassium channel activity. Interacts (via the C-tail domain) with CALM1; the calmodulin binding is constitutive, does not require calcium and mediates calcium-dependent gating and four calmodulin molecules bind to one channel tetramer. Post-translationally, phosphorylation at His-358 by NDKB activates the intermediate conductance calcium-activated potassium channel activity, and conversely it's dephosphorylation by PHPT1 inhibits this activity. As to expression, widely expressed in non-excitable tissues.

The protein localises to the cell membrane. It localises to the cell projection. Its subcellular location is the ruffle membrane. It catalyses the reaction K(+)(in) = K(+)(out). With respect to regulation, the channel is inhibited by clotrimazole and charybdotoxin but is insensitive to apamin. Its function is as follows. Intermediate conductance calcium-activated potassium channel that mediates the voltage-independent transmembrane transfer of potassium across the cell membrane through a constitutive interaction with calmodulin which binds the intracellular calcium allowing its opening. The current is characterized by a voltage-independent activation, an intracellular calcium concentration increase-dependent activation and a single-channel conductance of about 25 picosiemens. Also presents an inwardly rectifying current, thus reducing its already small outward conductance of potassium ions, which is particularly the case when the membrane potential displays positive values, above + 20 mV. Controls calcium influx during vascular contractility by being responsible of membrane hyperpolarization induced by vasoactive factors in proliferative vascular smooth muscle cell types. Following calcium influx, the consecutive activation of KCNN4 channel leads to a hyperpolarization of the cell membrane potential and hence an increase of the electrical driving force for further calcium influx promoting sustained calcium entry in response to stimulation with chemotactic peptides. Required for maximal calcium influx and proliferation during the reactivation of naive T-cells. Plays a role in the late stages of EGF-induced macropinocytosis through activation by PI(3)P. The protein is Intermediate conductance calcium-activated potassium channel protein 4 of Homo sapiens (Human).